Consider the following 89-residue polypeptide: Small ribosomal subunit protein uS15 (89 aa).

It belongs to the universal ribosomal protein uS15 family. Part of the 30S ribosomal subunit. Forms a bridge to the 50S subunit in the 70S ribosome, contacting the 23S rRNA.

One of the primary rRNA binding proteins, it binds directly to 16S rRNA where it helps nucleate assembly of the platform of the 30S subunit by binding and bridging several RNA helices of the 16S rRNA. In terms of biological role, forms an intersubunit bridge (bridge B4) with the 23S rRNA of the 50S subunit in the ribosome. This is Small ribosomal subunit protein uS15 from Chlamydia pneumoniae (Chlamydophila pneumoniae).